Consider the following 400-residue polypeptide: Renin (400 aa).

An N-terminal signal peptide occupies residues 1–23 (MDAWRGMPRWGLLLLLWGSCTFG). The propeptide at 24–60 (LPTETTTFKRISLKRMPSIRESLKERGVDMARLGPER) is activation peptide. N-linked (GlcNAc...) asparagine glycosylation occurs at Asn-65. The region spanning 80–397 (YYGEIGIGTP…DRGNNRIGFA (318 aa)) is the Peptidase A1 domain. The active site involves Asp-98. An intrachain disulfide couples Cys-111 to Cys-118. Asn-135 carries an N-linked (GlcNAc...) asparagine glycan. Cys-277 and Cys-281 form a disulfide bridge. Asp-286 is a catalytic residue. Cysteines 319 and 356 form a disulfide.

The protein belongs to the peptidase A1 family. Interacts with ATP6AP2.

The protein resides in the secreted. It is found in the membrane. It carries out the reaction Cleavage of Leu-|-Xaa bond in angiotensinogen to generate angiotensin I.. With respect to regulation, interaction with ATP6AP2 results in a 5-fold increased efficiency in angiotensinogen processing. Functionally, renin is a highly specific endopeptidase, whose only known function is to generate angiotensin I from angiotensinogen in the plasma, initiating a cascade of reactions that produce an elevation of blood pressure and increased sodium retention by the kidney. This is Renin (REN) from Callithrix jacchus (White-tufted-ear marmoset).